The sequence spans 34 residues: MSDIN-like toxin proprotein 4 (34 aa).

A propeptide spanning residues 1–10 is cleaved from the precursor; sequence MSDINTARLP. The segment at residues 11-20 is a cross-link (cyclopeptide (Leu-Pro)); it reads LFLPPVRMPP. Positions 21-34 are excised as a propeptide; sequence CVGDDIEMVLTRGE.

This sequence belongs to the MSDIN fungal toxin family. Post-translationally, processed by the macrocyclase-peptidase enzyme POPB to yield a toxic cyclic decapeptide. POPB first removes 10 residues from the N-terminus. Conformational trapping of the remaining peptide forces the enzyme to release this intermediate rather than proceed to macrocyclization. The enzyme rebinds the remaining peptide in a different conformation and catalyzes macrocyclization of the N-terminal 10 residues.

Probable toxin that belongs to the MSDIN-like toxin family responsible for a large number of food poisoning cases and deaths. This is MSDIN-like toxin proprotein 4 from Amanita bisporigera (Destroying angel).